A 62-amino-acid polypeptide reads, in one-letter code: Regulator of rDNA transcription protein 15 (62 aa).

The protein belongs to the ART2/RRT15 family.

Functionally, involved in modulation of rDNA transcription. The polypeptide is Regulator of rDNA transcription protein 15 (RRT15) (Saccharomyces cerevisiae (strain ATCC 204508 / S288c) (Baker's yeast)).